Reading from the N-terminus, the 191-residue chain is Large ribosomal subunit protein uL6B (191 aa).

Belongs to the universal ribosomal protein uL6 family. As to quaternary structure, component of the large ribosomal subunit (LSU). Mature yeast ribosomes consist of a small (40S) and a large (60S) subunit. The 40S small subunit contains 1 molecule of ribosomal RNA (18S rRNA) and 33 different proteins (encoded by 57 genes). The large 60S subunit contains 3 rRNA molecules (25S, 5.8S and 5S rRNA) and 46 different proteins (encoded by 81 genes).

It is found in the cytoplasm. Its function is as follows. Component of the ribosome, a large ribonucleoprotein complex responsible for the synthesis of proteins in the cell. The small ribosomal subunit (SSU) binds messenger RNAs (mRNAs) and translates the encoded message by selecting cognate aminoacyl-transfer RNA (tRNA) molecules. The large subunit (LSU) contains the ribosomal catalytic site termed the peptidyl transferase center (PTC), which catalyzes the formation of peptide bonds, thereby polymerizing the amino acids delivered by tRNAs into a polypeptide chain. The nascent polypeptides leave the ribosome through a tunnel in the LSU and interact with protein factors that function in enzymatic processing, targeting, and the membrane insertion of nascent chains at the exit of the ribosomal tunnel. This Saccharomyces cerevisiae (strain ATCC 204508 / S288c) (Baker's yeast) protein is Large ribosomal subunit protein uL6B.